We begin with the raw amino-acid sequence, 447 residues long: Tubulin beta-5 chain (447 aa).

8 residues coordinate GTP: Q11, E69, S138, G142, T143, G144, N204, and N226. E69 provides a ligand contact to Mg(2+). Residues 424 to 447 form a disordered region; the sequence is QYQDATAEEEGEFDEDEELDDAMG. Over residues 429 to 447 the composition is skewed to acidic residues; sequence TAEEEGEFDEDEELDDAMG.

It belongs to the tubulin family. As to quaternary structure, dimer of alpha and beta chains. A typical microtubule is a hollow water-filled tube with an outer diameter of 25 nm and an inner diameter of 15 nM. Alpha-beta heterodimers associate head-to-tail to form protofilaments running lengthwise along the microtubule wall with the beta-tubulin subunit facing the microtubule plus end conferring a structural polarity. Microtubules usually have 13 protofilaments but different protofilament numbers can be found in some organisms and specialized cells. Mg(2+) is required as a cofactor.

It is found in the cytoplasm. Its subcellular location is the cytoskeleton. Its function is as follows. Tubulin is the major constituent of microtubules, a cylinder consisting of laterally associated linear protofilaments composed of alpha- and beta-tubulin heterodimers. Microtubules grow by the addition of GTP-tubulin dimers to the microtubule end, where a stabilizing cap forms. Below the cap, tubulin dimers are in GDP-bound state, owing to GTPase activity of alpha-tubulin. This is Tubulin beta-5 chain (TUBB5) from Ectocarpus variabilis (Brown alga).